Consider the following 101-residue polypeptide: Small ribosomal subunit protein uS14 (101 aa).

Residues 53-72 are disordered; it reads RDAAAVRVRNRDSHDGRPRG. Positions 61–70 are enriched in basic and acidic residues; the sequence is RNRDSHDGRP.

The protein belongs to the universal ribosomal protein uS14 family. In terms of assembly, part of the 30S ribosomal subunit. Contacts proteins S3 and S10.

Functionally, binds 16S rRNA, required for the assembly of 30S particles and may also be responsible for determining the conformation of the 16S rRNA at the A site. This chain is Small ribosomal subunit protein uS14, found in Corynebacterium glutamicum (strain R).